Consider the following 67-residue polypeptide: uncharacterized protein (67 aa).

A run of 2 helical transmembrane segments spans residues 8 to 28 (MWFA…IYLS) and 41 to 61 (ISSF…VVVF).

The protein resides in the cell membrane. This is an uncharacterized protein from Bacillus subtilis (strain 168).